The sequence spans 471 residues: UDP-N-acetylmuramate--L-alanine ligase (471 aa).

114-120 serves as a coordination point for ATP; the sequence is GTHGKTT.

Belongs to the MurCDEF family.

The protein localises to the cytoplasm. It catalyses the reaction UDP-N-acetyl-alpha-D-muramate + L-alanine + ATP = UDP-N-acetyl-alpha-D-muramoyl-L-alanine + ADP + phosphate + H(+). Its pathway is cell wall biogenesis; peptidoglycan biosynthesis. Functionally, cell wall formation. The protein is UDP-N-acetylmuramate--L-alanine ligase of Allorhizobium ampelinum (strain ATCC BAA-846 / DSM 112012 / S4) (Agrobacterium vitis (strain S4)).